We begin with the raw amino-acid sequence, 186 residues long: Imidazole glycerol phosphate synthase subunit HisH (186 aa).

One can recognise a Glutamine amidotransferase type-1 domain in the interval 1–186 (MIAIIDYGSG…KLLRNFGELA (186 aa)). Catalysis depends on Cys72, which acts as the Nucleophile. Residues His167 and Glu169 contribute to the active site.

Heterodimer of HisH and HisF.

It is found in the cytoplasm. It catalyses the reaction 5-[(5-phospho-1-deoxy-D-ribulos-1-ylimino)methylamino]-1-(5-phospho-beta-D-ribosyl)imidazole-4-carboxamide + L-glutamine = D-erythro-1-(imidazol-4-yl)glycerol 3-phosphate + 5-amino-1-(5-phospho-beta-D-ribosyl)imidazole-4-carboxamide + L-glutamate + H(+). The catalysed reaction is L-glutamine + H2O = L-glutamate + NH4(+). Its pathway is amino-acid biosynthesis; L-histidine biosynthesis; L-histidine from 5-phospho-alpha-D-ribose 1-diphosphate: step 5/9. Functionally, IGPS catalyzes the conversion of PRFAR and glutamine to IGP, AICAR and glutamate. The HisH subunit catalyzes the hydrolysis of glutamine to glutamate and ammonia as part of the synthesis of IGP and AICAR. The resulting ammonia molecule is channeled to the active site of HisF. This chain is Imidazole glycerol phosphate synthase subunit HisH, found in Picrophilus torridus (strain ATCC 700027 / DSM 9790 / JCM 10055 / NBRC 100828 / KAW 2/3).